We begin with the raw amino-acid sequence, 285 residues long: MKQVAIFAKVHDPRCQGVASELVTWLEERKCLPLVDTHLARHVGYARGLTEKQIRDRAELVVVLGGDGTLISVARLFSSRQVPIVGVNLGSLGFLTEITVEQLYPVLEQCLADSHRITERMMLDVTVTRGDQEISHCQVLNDAVINKGALARIIELEARVNDDFLTNFKADGLIISTPTGSTGYSLSAGGPIVQPLMKCVLITPICPHTLTNRPIVLSYQSVIRITVKSSFDEMVYLTLDGQVGVELQEGDCIEVSRAETTTALVTSPEKDYFAILRAKLKWGER.

Asp-67 (proton acceptor) is an active-site residue. NAD(+) is bound by residues Asp-67–Gly-68, Asn-141–Asp-142, Arg-152, Lys-169, Asp-171, Thr-182–Ser-187, and Gln-242.

The protein belongs to the NAD kinase family. Requires a divalent metal cation as cofactor.

The protein localises to the cytoplasm. It carries out the reaction NAD(+) + ATP = ADP + NADP(+) + H(+). In terms of biological role, involved in the regulation of the intracellular balance of NAD and NADP, and is a key enzyme in the biosynthesis of NADP. Catalyzes specifically the phosphorylation on 2'-hydroxyl of the adenosine moiety of NAD to yield NADP. In Trichlorobacter lovleyi (strain ATCC BAA-1151 / DSM 17278 / SZ) (Geobacter lovleyi), this protein is NAD kinase.